A 202-amino-acid polypeptide reads, in one-letter code: Ribonuclease HII (202 aa).

The RNase H type-2 domain occupies 13 to 202; sequence KIEAGLDEAG…HFKPKQLDLF (190 aa). Asp19, Glu20, and Asp112 together coordinate a divalent metal cation.

Belongs to the RNase HII family. Mn(2+) is required as a cofactor. Mg(2+) serves as cofactor.

It localises to the cytoplasm. The catalysed reaction is Endonucleolytic cleavage to 5'-phosphomonoester.. Its function is as follows. Endonuclease that specifically degrades the RNA of RNA-DNA hybrids. This chain is Ribonuclease HII, found in Cytophaga hutchinsonii (strain ATCC 33406 / DSM 1761 / CIP 103989 / NBRC 15051 / NCIMB 9469 / D465).